We begin with the raw amino-acid sequence, 112 residues long: Large ribosomal subunit protein P1 (112 aa).

Residues 71–90 are compositionally biased toward low complexity; sequence PAQAAAAAPAGGAPAAAAPA. Residues 71-112 are disordered; that stretch reads PAQAAAAAPAGGAPAAAAPAESKEGRRSQGESDDDMGFGLLD. The segment covering 91–100 has biased composition (basic and acidic residues); sequence ESKEGRRSQG.

Belongs to the eukaryotic ribosomal protein P1/P2 family. As to quaternary structure, P1 and P2 exist as dimers at the large ribosomal subunit.

Its function is as follows. Plays an important role in the elongation step of protein synthesis. In Oscheius tipulae, this protein is Large ribosomal subunit protein P1 (rpl-21).